Consider the following 536-residue polypeptide: Peptide chain release factor 3 (536 aa).

Positions 13-281 (SHRRTFAIIS…ALIDWAPAPQ (269 aa)) constitute a tr-type G domain. Residues 22–29 (SHPDAGKT), 90–94 (DTPGH), and 144–147 (NKCD) contribute to the GTP site.

Belongs to the TRAFAC class translation factor GTPase superfamily. Classic translation factor GTPase family. PrfC subfamily.

Its subcellular location is the cytoplasm. Increases the formation of ribosomal termination complexes and stimulates activities of RF-1 and RF-2. It binds guanine nucleotides and has strong preference for UGA stop codons. It may interact directly with the ribosome. The stimulation of RF-1 and RF-2 is significantly reduced by GTP and GDP, but not by GMP. This chain is Peptide chain release factor 3, found in Chromobacterium violaceum (strain ATCC 12472 / DSM 30191 / JCM 1249 / CCUG 213 / NBRC 12614 / NCIMB 9131 / NCTC 9757 / MK).